A 289-amino-acid chain; its full sequence is Ribosomal RNA small subunit methyltransferase A (289 aa).

Positions 28, 30, 55, 76, 101, and 125 each coordinate S-adenosyl-L-methionine.

The protein belongs to the class I-like SAM-binding methyltransferase superfamily. rRNA adenine N(6)-methyltransferase family. RsmA subfamily.

The protein resides in the cytoplasm. It carries out the reaction adenosine(1518)/adenosine(1519) in 16S rRNA + 4 S-adenosyl-L-methionine = N(6)-dimethyladenosine(1518)/N(6)-dimethyladenosine(1519) in 16S rRNA + 4 S-adenosyl-L-homocysteine + 4 H(+). In terms of biological role, specifically dimethylates two adjacent adenosines (A1518 and A1519) in the loop of a conserved hairpin near the 3'-end of 16S rRNA in the 30S particle. May play a critical role in biogenesis of 30S subunits. The polypeptide is Ribosomal RNA small subunit methyltransferase A (Clostridioides difficile (strain 630) (Peptoclostridium difficile)).